A 187-amino-acid polypeptide reads, in one-letter code: Protein GrpE (187 aa).

Positions 1–30 are disordered; that stretch reads MEKKETKSESEKTNKQDNKNTKSQKKENLN.

It belongs to the GrpE family. As to quaternary structure, homodimer.

It localises to the cytoplasm. In terms of biological role, participates actively in the response to hyperosmotic and heat shock by preventing the aggregation of stress-denatured proteins, in association with DnaK and GrpE. It is the nucleotide exchange factor for DnaK and may function as a thermosensor. Unfolded proteins bind initially to DnaJ; upon interaction with the DnaJ-bound protein, DnaK hydrolyzes its bound ATP, resulting in the formation of a stable complex. GrpE releases ADP from DnaK; ATP binding to DnaK triggers the release of the substrate protein, thus completing the reaction cycle. Several rounds of ATP-dependent interactions between DnaJ, DnaK and GrpE are required for fully efficient folding. The sequence is that of Protein GrpE from Borreliella burgdorferi (strain ATCC 35210 / DSM 4680 / CIP 102532 / B31) (Borrelia burgdorferi).